An 83-amino-acid chain; its full sequence is Keratin-associated protein 6-1 (83 aa).

The RPT 1-1 repeat unit spans residues 9 to 15 (YGGLGCG). An RPT 1-2 repeat occupies 19 to 25 (YGGLGCG). The stretch at 44–55 (GYGYGSRSLCGS) is one RPT 2-1 repeat. Residues 56–67 (GYGYGSRSLCGS) form an RPT 2-2 repeat.

It belongs to the KRTAP type 6 family. In terms of assembly, interacts with wool keratins.

In terms of biological role, in the wool cortex, wool keratin intermediate filaments are embedded in an interfilamentous matrix, consisting of hair keratin-associated proteins (KRTAP), which are essential for the formation of a rigid and resistant wool shaft through their extensive disulfide bond cross-linking with abundant cysteine residues of wool keratins. The matrix proteins include the high-sulfur and high-glycine-tyrosine keratins. The protein is Keratin-associated protein 6-1 (KRTAP6-1) of Ovis aries (Sheep).